A 377-amino-acid polypeptide reads, in one-letter code: TelA-like protein SSP1345 (377 aa).

The span at 1 to 18 shows a compositional bias: basic and acidic residues; the sequence is MAREQDSINSHPLDKYID. The segment at 1-39 is disordered; sequence MAREQDSINSHPLDKYIDENSANESEIIKSSSQFSHEDQ. Over residues 20-34 the composition is skewed to polar residues; it reads NSANESEIIKSSSQF.

Belongs to the TelA family.

The chain is TelA-like protein SSP1345 from Staphylococcus saprophyticus subsp. saprophyticus (strain ATCC 15305 / DSM 20229 / NCIMB 8711 / NCTC 7292 / S-41).